A 396-amino-acid polypeptide reads, in one-letter code: Alanine racemase (396 aa).

Lys46 serves as the catalytic Proton acceptor; specific for D-alanine. Lys46 is modified (N6-(pyridoxal phosphate)lysine). Position 145 (Arg145) interacts with substrate. Residue Tyr280 is the Proton acceptor; specific for L-alanine of the active site. Substrate is bound at residue Met328.

Belongs to the alanine racemase family. The cofactor is pyridoxal 5'-phosphate.

It carries out the reaction L-alanine = D-alanine. The protein operates within amino-acid biosynthesis; D-alanine biosynthesis; D-alanine from L-alanine: step 1/1. Its function is as follows. Catalyzes the interconversion of L-alanine and D-alanine. May also act on other amino acids. This is Alanine racemase (alr) from Brucella ovis (strain ATCC 25840 / 63/290 / NCTC 10512).